The primary structure comprises 453 residues: MPFIPHTEAEVRDMLAAIGAGSIDELFAEIPPDLRCGELKDLPEALSEMEVCKLMEERAAENRSALCFAGAGAYEHYIPAAVWEIALRGEFYSAYTPYQAEASQGSLQVFYEYQSMMAGLMAMDVSNASLYDGASALGEAILMALRTNPESRSRKILLPRSLNPVYKRVVRTLTRNQRVELVDLDYDRSLGRIAENALETFEGGEFAAVVIPQPNHFGVLEEVDVLADWAHRHGARSIAVVNPTAMALLKPPGEWGEHGADLACGEGQPLGIPLSAGGPYFGFLCSRQDFVHQLPGRLVGRTVDVDGREGFTLTLQPREQHIRRGKATSNICTNQGLMVTAATLYMALMGPKGLRNVAAACHANASALLERLTRIDGVEPVFPAPFFHEAAIRLPRAADRVLAGLAERGILGGHVLSADYPELGDALLICATETRGPEDMDRYAAALAEVLEC.

This sequence belongs to the GcvP family. N-terminal subunit subfamily. The glycine cleavage system is composed of four proteins: P, T, L and H. In this organism, the P 'protein' is a heterodimer of two subunits.

It catalyses the reaction N(6)-[(R)-lipoyl]-L-lysyl-[glycine-cleavage complex H protein] + glycine + H(+) = N(6)-[(R)-S(8)-aminomethyldihydrolipoyl]-L-lysyl-[glycine-cleavage complex H protein] + CO2. In terms of biological role, the glycine cleavage system catalyzes the degradation of glycine. The P protein binds the alpha-amino group of glycine through its pyridoxal phosphate cofactor; CO(2) is released and the remaining methylamine moiety is then transferred to the lipoamide cofactor of the H protein. The protein is Probable glycine dehydrogenase (decarboxylating) subunit 1 of Methylococcus capsulatus (strain ATCC 33009 / NCIMB 11132 / Bath).